We begin with the raw amino-acid sequence, 435 residues long: Methylenetetrahydrofolate--tRNA-(uracil-5-)-methyltransferase TrmFO (435 aa).

10–15 (GAGLAG) is a binding site for FAD.

This sequence belongs to the MnmG family. TrmFO subfamily. It depends on FAD as a cofactor.

Its subcellular location is the cytoplasm. The catalysed reaction is uridine(54) in tRNA + (6R)-5,10-methylene-5,6,7,8-tetrahydrofolate + NADH + H(+) = 5-methyluridine(54) in tRNA + (6S)-5,6,7,8-tetrahydrofolate + NAD(+). It carries out the reaction uridine(54) in tRNA + (6R)-5,10-methylene-5,6,7,8-tetrahydrofolate + NADPH + H(+) = 5-methyluridine(54) in tRNA + (6S)-5,6,7,8-tetrahydrofolate + NADP(+). Functionally, catalyzes the folate-dependent formation of 5-methyl-uridine at position 54 (M-5-U54) in all tRNAs. In Bacillus velezensis (strain DSM 23117 / BGSC 10A6 / LMG 26770 / FZB42) (Bacillus amyloliquefaciens subsp. plantarum), this protein is Methylenetetrahydrofolate--tRNA-(uracil-5-)-methyltransferase TrmFO.